The chain runs to 255 residues: Anamorsin homolog (255 aa).

The interval 1-163 (MPKETLVVSK…VRPNWKSKTD (163 aa)) is N-terminal SAM-like domain. The tract at residues 164–185 (KKSPSMIDAAPIDGYISKAPDY) is linker. Residues C188, C195, C198, and C200 each coordinate [2Fe-2S] cluster. The interval 188–200 (CSTKPRACANCTC) is fe-S binding site A. Residues C224, C227, C235, and C238 each contribute to the [4Fe-4S] cluster site. Short sequence motifs (cx2C motif) lie at residues 224 to 227 (CGNC) and 235 to 238 (CESC). The segment at 224-238 (CGNCYLGDAFRCESC) is fe-S binding site B.

It belongs to the anamorsin family. As to quaternary structure, monomer. [2Fe-2S] cluster serves as cofactor. [4Fe-4S] cluster is required as a cofactor.

It localises to the cytoplasm. It is found in the mitochondrion intermembrane space. Component of the cytosolic iron-sulfur (Fe-S) protein assembly (CIA) machinery. Required for the maturation of extramitochondrial Fe-S proteins. Part of an electron transfer chain functioning in an early step of cytosolic Fe-S biogenesis, facilitating the de novo assembly of a [4Fe-4S] cluster on the cytosolic Fe-S scaffold complex. Electrons are transferred from NADPH via a FAD- and FMN-containing diflavin oxidoreductase. Together with the diflavin oxidoreductase, also required for the assembly of the diferric tyrosyl radical cofactor of ribonucleotide reductase (RNR), probably by providing electrons for reduction during radical cofactor maturation in the catalytic small subunit. This chain is Anamorsin homolog, found in Theileria annulata.